Reading from the N-terminus, the 282-residue chain is Tryptophan 2,3-dioxygenase (282 aa).

Residues 51-55, Tyr113, and Arg117 contribute to the substrate site; that span reads FIIQH. His240 provides a ligand contact to heme. Thr254 is a substrate binding site.

This sequence belongs to the tryptophan 2,3-dioxygenase family. As to quaternary structure, homotetramer. Heme is required as a cofactor.

It catalyses the reaction L-tryptophan + O2 = N-formyl-L-kynurenine. It functions in the pathway amino-acid degradation; L-tryptophan degradation via kynurenine pathway; L-kynurenine from L-tryptophan: step 1/2. Heme-dependent dioxygenase that catalyzes the oxidative cleavage of the L-tryptophan (L-Trp) pyrrole ring and converts L-tryptophan to N-formyl-L-kynurenine. Catalyzes the oxidative cleavage of the indole moiety. This is Tryptophan 2,3-dioxygenase from Polaromonas naphthalenivorans (strain CJ2).